The chain runs to 196 residues: 7-methyl-GTP pyrophosphatase (196 aa).

Catalysis depends on Asp69, which acts as the Proton acceptor.

Belongs to the Maf family. YceF subfamily. A divalent metal cation serves as cofactor.

It localises to the cytoplasm. It carries out the reaction N(7)-methyl-GTP + H2O = N(7)-methyl-GMP + diphosphate + H(+). Its function is as follows. Nucleoside triphosphate pyrophosphatase that hydrolyzes 7-methyl-GTP (m(7)GTP). May have a dual role in cell division arrest and in preventing the incorporation of modified nucleotides into cellular nucleic acids. In Photorhabdus laumondii subsp. laumondii (strain DSM 15139 / CIP 105565 / TT01) (Photorhabdus luminescens subsp. laumondii), this protein is 7-methyl-GTP pyrophosphatase.